We begin with the raw amino-acid sequence, 265 residues long: Transcription factor LBX1 (265 aa).

A compositionally biased stretch (basic and acidic residues) spans 1-20 (MTSKDEAKSSSVEERRRHAL). Positions 1–33 (MTSKDEAKSSSVEERRRHALDLLPPPANSNKPL) are disordered. Residues 125-184 (RRKSRTAFTNHQIYELEKRFLYQKYLSPADRDQIAQQLGLTNAQVITWFQNRRAKLKRDL) constitute a DNA-binding region (homeobox). Residues 212–265 (EEETNSVRDDSRSRSPQLGLSGHMPLSPSSPLTEQHTSKECSEDEEDVEIDVDD) are disordered. Over residues 253 to 265 (SEDEEDVEIDVDD) the composition is skewed to acidic residues.

It localises to the nucleus. In terms of biological role, transcription factor that controls hypaxial muscle development by down-regulating myod1 and cdkn1b/p27, thereby allowing myoblasts to proliferate before the onset of terminal differentiation. In Xenopus tropicalis (Western clawed frog), this protein is Transcription factor LBX1.